Reading from the N-terminus, the 253-residue chain is Phosphoadenosine 5'-phosphosulfate reductase (253 aa).

C239 functions as the Nucleophile; cysteine thiosulfonate intermediate in the catalytic mechanism.

This sequence belongs to the PAPS reductase family. CysH subfamily.

It localises to the cytoplasm. The enzyme catalyses [thioredoxin]-disulfide + sulfite + adenosine 3',5'-bisphosphate + 2 H(+) = [thioredoxin]-dithiol + 3'-phosphoadenylyl sulfate. The protein operates within sulfur metabolism; hydrogen sulfide biosynthesis; sulfite from sulfate: step 3/3. Catalyzes the formation of sulfite from phosphoadenosine 5'-phosphosulfate (PAPS) using thioredoxin as an electron donor. This Photobacterium profundum (strain SS9) protein is Phosphoadenosine 5'-phosphosulfate reductase.